The sequence spans 906 residues: DNA mismatch repair protein MutS (906 aa).

656–663 serves as a coordination point for ATP; the sequence is GPNMAGKS.

Belongs to the DNA mismatch repair MutS family.

In terms of biological role, this protein is involved in the repair of mismatches in DNA. It is possible that it carries out the mismatch recognition step. This protein has a weak ATPase activity. This is DNA mismatch repair protein MutS from Rhodopseudomonas palustris (strain BisA53).